A 238-amino-acid chain; its full sequence is 4-hydroxy-tetrahydrodipicolinate reductase (238 aa).

12–17 (GASGRM) lines the NAD(+) pocket. Arg-40 is a binding site for NADP(+). Residues 93–95 (GTT) and 117–120 (ASNF) contribute to the NAD(+) site. His-149 functions as the Proton donor/acceptor in the catalytic mechanism. Position 150 (His-150) interacts with (S)-2,3,4,5-tetrahydrodipicolinate. Residue Lys-153 is the Proton donor of the active site. 159-160 (GT) is a (S)-2,3,4,5-tetrahydrodipicolinate binding site.

The protein belongs to the DapB family.

Its subcellular location is the cytoplasm. It catalyses the reaction (S)-2,3,4,5-tetrahydrodipicolinate + NAD(+) + H2O = (2S,4S)-4-hydroxy-2,3,4,5-tetrahydrodipicolinate + NADH + H(+). It carries out the reaction (S)-2,3,4,5-tetrahydrodipicolinate + NADP(+) + H2O = (2S,4S)-4-hydroxy-2,3,4,5-tetrahydrodipicolinate + NADPH + H(+). The protein operates within amino-acid biosynthesis; L-lysine biosynthesis via DAP pathway; (S)-tetrahydrodipicolinate from L-aspartate: step 4/4. Its function is as follows. Catalyzes the conversion of 4-hydroxy-tetrahydrodipicolinate (HTPA) to tetrahydrodipicolinate. In Xanthomonas campestris pv. campestris (strain 8004), this protein is 4-hydroxy-tetrahydrodipicolinate reductase.